A 408-amino-acid chain; its full sequence is Na(+)/H(+) antiporter NhaA 2 (408 aa).

Transmembrane regions (helical) follow at residues 36–56, 79–99, 115–135, 145–165, 174–194, 197–217, 225–245, 281–301, 310–330, 348–368, and 381–401; these read GILL…GLGV, ILLW…GLEI, ALPV…YFLF, GWGI…SLLG, IFLA…IAVF, SELH…LMVF, LFFY…SGIH, FIIM…SEML, LGII…MSWL, VLGL…IALL, and FAIL…LSSY.

The protein belongs to the NhaA Na(+)/H(+) (TC 2.A.33) antiporter family.

The protein localises to the cell inner membrane. It catalyses the reaction Na(+)(in) + 2 H(+)(out) = Na(+)(out) + 2 H(+)(in). In terms of biological role, na(+)/H(+) antiporter that extrudes sodium in exchange for external protons. The polypeptide is Na(+)/H(+) antiporter NhaA 2 (Flavobacterium johnsoniae (strain ATCC 17061 / DSM 2064 / JCM 8514 / BCRC 14874 / CCUG 350202 / NBRC 14942 / NCIMB 11054 / UW101) (Cytophaga johnsonae)).